The chain runs to 330 residues: D-lactate dehydrogenase (330 aa).

NAD(+) is bound by residues 155-156 (RI), Asp-175, 206-207 (MP), Asn-212, 233-235 (MAR), and Asp-259. Arg-235 is a catalytic residue. Residue Glu-264 is part of the active site. The active-site Proton donor is His-296.

It belongs to the D-isomer specific 2-hydroxyacid dehydrogenase family.

It catalyses the reaction (R)-lactate + NAD(+) = pyruvate + NADH + H(+). In Streptococcus agalactiae serotype III (strain NEM316), this protein is D-lactate dehydrogenase (ldhD).